A 379-amino-acid polypeptide reads, in one-letter code: Homoserine O-succinyltransferase (379 aa).

One can recognise an AB hydrolase-1 domain in the interval 48-357 (NAVLICHALS…SAHGHDAFLM (310 aa)). S154 serves as the catalytic Nucleophile. Substrate is bound at residue R224. Active-site residues include D319 and H352. D353 is a binding site for substrate.

It belongs to the AB hydrolase superfamily. MetX family. As to quaternary structure, homodimer.

Its subcellular location is the cytoplasm. It carries out the reaction L-homoserine + succinyl-CoA = O-succinyl-L-homoserine + CoA. Its pathway is amino-acid biosynthesis; L-methionine biosynthesis via de novo pathway; O-succinyl-L-homoserine from L-homoserine: step 1/1. Functionally, transfers a succinyl group from succinyl-CoA to L-homoserine, forming succinyl-L-homoserine. The polypeptide is Homoserine O-succinyltransferase (Neisseria meningitidis serogroup B (strain ATCC BAA-335 / MC58)).